A 150-amino-acid chain; its full sequence is Large ribosomal subunit protein bL9 (150 aa).

The protein belongs to the bacterial ribosomal protein bL9 family.

Functionally, binds to the 23S rRNA. The polypeptide is Large ribosomal subunit protein bL9 (Yersinia enterocolitica serotype O:8 / biotype 1B (strain NCTC 13174 / 8081)).